The primary structure comprises 453 residues: MSIVTVQLGQCGNQIGFEVFDALLSDSHSSQGLCCKRENEAYQASCKERFFSEEENGVPIARAVLVDMEPKVINQTLSKAAQSGRWKYGQHACFCQKQGSGNNWAYGYSVHGPRHEESIMDLIRKEVEKCDSFSGFFIIMSMAGGTGSGIGAFVTQNLQDQYSNSLKMNQIIWPYGTGEVIVQNYNSILTLSHLYRSSDALLVHENDAVHKICAKLMNIKQISFSDINQVLAHQLGSVFQPTYSAESSFHYRRNPLGDLMEHLVPHPEFKMLSIRNVPHMSENSLAYSTFTWAGLLKHLRQMLISNAKMEEGIDWHARPPLSGLPSLGKMSLNKDLHFNTSIANLVILRGKDVQSADVEGFKDPALYTSWLEPVNAFNVWKTQRAFSKYEKSAVLVSNSQFLVKPLDMIVRKAWNMFASKAYIHQYTKFGIEEEDFLDSFTSLEQVVASYCNL.

GTP is bound at residue A143–G149.

Belongs to the tubulin family. Found in a complex with TEDC1, TEDC2, TUBE1 and TUBD1.

It is found in the nucleus. The protein localises to the cytoplasm. The protein resides in the cytoskeleton. Its subcellular location is the microtubule organizing center. It localises to the centrosome. It is found in the centriole. The protein localises to the cell projection. The protein resides in the cilium. Functionally, acts as a positive regulator of hedgehog signaling and regulates ciliary function. This Macaca fascicularis (Crab-eating macaque) protein is Tubulin delta chain (TUBD1).